The sequence spans 519 residues: Probable WRKY transcription factor 33 (519 aa).

Disordered stretches follow at residues 1-34 (MAAS…STSS) and 123-212 (SSGV…CTFP). A compositionally biased stretch (polar residues) spans 7–34 (TMDNSRTRQNMNGSANWSQQSGRTSTSS). Positions 130-142 (TTTTTTTTTTTTT) are enriched in low complexity. Positions 164–174 (TETRPNNQAVS) are enriched in polar residues. Over residues 178-188 (REQRKGEDGYN) the composition is skewed to basic and acidic residues. The segment at residues 178–242 (REQRKGEDGY…YKGSHNHPKP (65 aa)) is a DNA-binding region (WRKY 1). The Zn(2+) site is built by Cys-209, Cys-214, His-237, and His-239. Disordered regions lie at residues 232–255 (VYKG…SSTF) and 267–349 (NRQA…REPR). Positions 245 to 254 (TRRSSSSSST) are enriched in low complexity. Over residues 269–299 (QASSDQPNSNNSFHQSDSFGMQQEDNTTSDS) the composition is skewed to polar residues. Basic and acidic residues predominate over residues 323–332 (PEAKRWKGDN). Residues 356–421 (SDIDILDDGY…YEGKHNHDVP (66 aa)) constitute a DNA-binding region (WRKY 2). Zn(2+) is bound by residues Cys-387, Cys-392, His-416, and His-418.

It belongs to the WRKY group I family. As to quaternary structure, interacts with MKS1. Interacts with ATG18A. Interacts with SIB1 and SIB2. Interacts with VQ1 and VQ10. Post-translationally, phosphorylated by MPK4. Phosphorylated on serine residues by MPK3 and MPK6 following infection with the necrotrophic fungal pathogen B.cinerea. In terms of tissue distribution, highly expressed in roots, leaves and flowers, and at lower levels in stems, siliques and seeds.

The protein localises to the nucleus. Transcription factor. Interacts specifically with the W box (5'-TTGAC[CT]-3'), a frequently occurring elicitor-responsive cis-acting element. Involved in defense responses. Required for resistance to the necrotrophic fungal pathogen B.cinerea. Regulates the antagonistic relationship between defense pathways mediating responses to the bacterial pathogen P. syringae and the necrotrophic pathogen B.cinerea. Required for the phytoalexin camalexin synthesis following infection with B.cinerea. Acts as a positive regulator of the camalexin biosynthetic genes PAD3 (CYP71B15) and CYP71A13 by binding to their promoters. Acts downstream of MPK3 and MPK6 in reprogramming the expression of camalexin biosynthetic genes, which drives the metabolic flow to camalexin production. Functions with WRKY25 as positive regulator of salt stress response and abscisic acid (ABA) signaling. Functions with WRKY25 and WRKY26 as positive regulator of plant thermotolerance by partially participating in ethylene-response signal transduction pathway. The DNA-binding activity of WRKY33 is increased by SIB1 and SIB2. The sequence is that of Probable WRKY transcription factor 33 (WRKY33) from Arabidopsis thaliana (Mouse-ear cress).